A 34-amino-acid chain; its full sequence is Photosystem II reaction center protein M (34 aa).

The helical transmembrane segment at 5–25 (ILAFIATALFISIPTAFLLIP) threads the bilayer.

It belongs to the PsbM family. In terms of assembly, PSII is composed of 1 copy each of membrane proteins PsbA, PsbB, PsbC, PsbD, PsbE, PsbF, PsbH, PsbI, PsbJ, PsbK, PsbL, PsbM, PsbT, PsbX, PsbY, PsbZ, Psb30/Ycf12, at least 3 peripheral proteins of the oxygen-evolving complex and a large number of cofactors. It forms dimeric complexes.

Its subcellular location is the plastid. The protein resides in the chloroplast thylakoid membrane. Functionally, one of the components of the core complex of photosystem II (PSII). PSII is a light-driven water:plastoquinone oxidoreductase that uses light energy to abstract electrons from H(2)O, generating O(2) and a proton gradient subsequently used for ATP formation. It consists of a core antenna complex that captures photons, and an electron transfer chain that converts photonic excitation into a charge separation. This subunit is found at the monomer-monomer interface. The protein is Photosystem II reaction center protein M of Psilotum nudum (Whisk fern).